Reading from the N-terminus, the 2723-residue chain is Zinc finger protein 292 (2723 aa).

Residues 569–591 (YSCPICAKNFNSKETFVPHVTLH) form a C2H2-type 1 zinc finger. The tract at residues 608 to 633 (RLGRPPKITTTNENQKTNTVAKQEQR) is disordered. Positions 615 to 629 (ITTTNENQKTNTVAK) are enriched in polar residues. The residue at position 654 (Ser654) is a Phosphoserine. 5 consecutive C2H2-type zinc fingers follow at residues 681 to 705 (FNCP…VKGH), 722 to 744 (VICQ…LQMH), 750 to 774 (YICI…RKEH), 779 to 803 (AKCM…EAQH), and 807 to 831 (YTCK…LDDH). A compositionally biased stretch (basic and acidic residues) spans 825 to 834 (EKHLDDHSTP). The tract at residues 825–860 (EKHLDDHSTPPEKVLPPEAQLNSSGDSIQPSEVNQN) is disordered. Residues 844-860 (QLNSSGDSIQPSEVNQN) show a composition bias toward polar residues. The C2H2-type 7 zinc finger occupies 1098 to 1123 (FSCQVEGCTRTYNSSQSIGKHMKTAH). Lys1117 is modified (N6-acetyllysine). Position 1159 is a phosphoserine (Ser1159). The disordered stretch occupies residues 1331–1364 (SSTNAQQSAPEKVKKDRGRGPNGKERKPKHNKRA). Residues 1341-1355 (EKVKKDRGRGPNGKE) show a composition bias toward basic and acidic residues. The C2H2-type 8; degenerate zinc finger occupies 1375–1397 (FICSRCYRAFTNPRSLGGHLSKR). Over residues 1588–1627 (SFPNSGGPSQNFTSNSSRVSVISGPQNTRSSHLNKKGNSA) the composition is skewed to polar residues. Positions 1588 to 1634 (SFPNSGGPSQNFTSNSSRVSVISGPQNTRSSHLNKKGNSASKRRKKV) are disordered. Positions 1827–1854 (QSEVSHKEDQIQEILEGLQKLKLENDLS) form a coiled coil. 2 C2H2-type zinc fingers span residues 1902–1927 (FVCQ…GKIH) and 1947–1972 (FKCV…QLVH). The interval 1986 to 2023 (RPYGRKSQSENVPASRSTQVKKQLAMTEENKKESQPAL) is disordered. Positions 1994 to 2006 (SENVPASRSTQVK) are enriched in polar residues. Lys2042 carries the post-translational modification N6-acetyllysine. The segment at 2074 to 2103 (NTQTKGRKIRRHKKEKEEKKRKKPVSQSLE) is disordered. Over residues 2078–2097 (KGRKIRRHKKEKEEKKRKKP) the composition is skewed to basic residues. 4 C2H2-type zinc fingers span residues 2114–2139 (YRCV…QAVH), 2172–2197 (FRCQ…MKLH), 2216–2241 (FPCD…EADH), and 2256–2281 (YKCD…FNKH). Basic residues-rich tracts occupy residues 2285 to 2294 (HKAHLIRPRR) and 2312 to 2322 (KSKHRGTKHSR). The tract at residues 2285 to 2345 (HKAHLIRPRR…KKKNNLENKN (61 aa)) is disordered. Residues 2386 to 2410 (YPCMIKGCTSVVTSESNIIRHYKCH) form a C2H2-type 15 zinc finger. Over residues 2441-2452 (QEGAKNDVKDSD) the composition is skewed to basic and acidic residues. Disordered stretches follow at residues 2441–2480 (QEGA…EKDE), 2530–2564 (LKRV…VRKE), and 2606–2631 (QKKN…RKNI). Over residues 2453–2470 (TCVSESNDNSRTTATVSQ) the composition is skewed to polar residues. The span at 2606 to 2615 (QKKNTDKDHP) shows a compositional bias: basic and acidic residues.

The protein belongs to the krueppel C2H2-type zinc-finger protein family.

Its subcellular location is the nucleus. May be involved in transcriptional regulation. The protein is Zinc finger protein 292 (ZNF292) of Homo sapiens (Human).